We begin with the raw amino-acid sequence, 300 residues long: tRNA dimethylallyltransferase (300 aa).

11 to 18 (GPTAVGKS) provides a ligand contact to ATP. 13-18 (TAVGKS) lines the substrate pocket. The segment at 35–38 (DSIQ) is interaction with substrate tRNA.

It belongs to the IPP transferase family. As to quaternary structure, monomer. Mg(2+) is required as a cofactor.

The catalysed reaction is adenosine(37) in tRNA + dimethylallyl diphosphate = N(6)-dimethylallyladenosine(37) in tRNA + diphosphate. In terms of biological role, catalyzes the transfer of a dimethylallyl group onto the adenine at position 37 in tRNAs that read codons beginning with uridine, leading to the formation of N6-(dimethylallyl)adenosine (i(6)A). This chain is tRNA dimethylallyltransferase, found in Borreliella afzelii (strain PKo) (Borrelia afzelii).